The primary structure comprises 391 residues: Shewanella-like protein phosphatase 2 (391 aa).

Mn(2+) is bound by residues D61, H63, D97, and N132. H133 functions as the Proton donor in the catalytic mechanism. Residues H232 and H295 each contribute to the Mn(2+) site.

It belongs to the metallophosphoesterase superfamily. SLP family. It depends on Mn(2+) as a cofactor. In terms of tissue distribution, expressed in roots and siliques (at protein level).

The protein resides in the cytoplasm. The protein localises to the cytosol. Functionally, shows phosphatase activity, hydrolyzing the artificial substrate para-nitrophenylphosphate (pNPP) in vitro. The polypeptide is Shewanella-like protein phosphatase 2 (Arabidopsis thaliana (Mouse-ear cress)).